We begin with the raw amino-acid sequence, 575 residues long: MRASKYLIATYKETPADAEVISHQLMLRAGLIRKLASGLYNWLPAGLRVLRKVETIVREEMDRAGAQEVLMPVVQPAELWEESGRWQQYGPELLRINDRHDRAFCLGPTHEEVITDLIRNELKSYKQLPANFYQIQTKFRDEVRPRFGVMRAREFLMKDAYSFHASQECLQETYDIMHAAYCKIFDRIGLDYRPVLADTGSIGGTGSHEFHVLADSGEDDIAFSTESNFAANVELAEALAPAKQTAEPLPREEVATPNVKTIEDVAKLLDVPTTQTVKTLIVKGVENEDGKHTLVALVLRGDHALNDIKAIKLAHVANPLEFADESGIKAAVGAEVGSLGPIGLSMPVYVDRAAAALVNFVCGANKDGYHYTNANWSDAAEHKVVDIRNVVIGDPSPCGKGTIDIKRGIEVGHIFQLGTKYSEAMKASVLDENGKDKTMIMGCYGIGVSRIVASAIEQNYDDNGIIWPDAIAPFHVAIVPINMQKSEAVAQKCEELYAQLNQLGYDVLLMDEPKARLGGMLADTELMGIPHRIVVGDRGLEKGQLEYKCRRDSDSQDIAVDDIIEFINNAVKTGK.

It belongs to the class-II aminoacyl-tRNA synthetase family. ProS type 1 subfamily. In terms of assembly, homodimer.

The protein localises to the cytoplasm. The catalysed reaction is tRNA(Pro) + L-proline + ATP = L-prolyl-tRNA(Pro) + AMP + diphosphate. Catalyzes the attachment of proline to tRNA(Pro) in a two-step reaction: proline is first activated by ATP to form Pro-AMP and then transferred to the acceptor end of tRNA(Pro). As ProRS can inadvertently accommodate and process non-cognate amino acids such as alanine and cysteine, to avoid such errors it has two additional distinct editing activities against alanine. One activity is designated as 'pretransfer' editing and involves the tRNA(Pro)-independent hydrolysis of activated Ala-AMP. The other activity is designated 'posttransfer' editing and involves deacylation of mischarged Ala-tRNA(Pro). The misacylated Cys-tRNA(Pro) is not edited by ProRS. This chain is Proline--tRNA ligase, found in Saccharophagus degradans (strain 2-40 / ATCC 43961 / DSM 17024).